The following is an 86-amino-acid chain: Translation machinery-associated protein 10 (86 aa).

A phosphoserine mark is found at Ser-28 and Ser-79. The tract at residues 63-86 (NKTRRGSNSQNNERRLSDLQQYHI) is disordered.

Belongs to the STF2 family. Associates with ribosomes.

It localises to the cytoplasm. Its subcellular location is the nucleus. May be involved in inhibition of the reverse ATPase reaction of mitochondrial F(1)F(0)-type ATP synthase. The polypeptide is Translation machinery-associated protein 10 (Saccharomyces cerevisiae (strain ATCC 204508 / S288c) (Baker's yeast)).